The sequence spans 489 residues: Lysine--tRNA ligase (489 aa).

Residues Glu-399 and Glu-406 each coordinate Mg(2+).

Belongs to the class-II aminoacyl-tRNA synthetase family. Homodimer. It depends on Mg(2+) as a cofactor.

It is found in the cytoplasm. The enzyme catalyses tRNA(Lys) + L-lysine + ATP = L-lysyl-tRNA(Lys) + AMP + diphosphate. The chain is Lysine--tRNA ligase (lysS) from Mycoplasma pneumoniae (strain ATCC 29342 / M129 / Subtype 1) (Mycoplasmoides pneumoniae).